Consider the following 453-residue polypeptide: Anthocyanidin 3-O-glucosyltransferase (453 aa).

H17 (proton acceptor) is an active-site residue. Residue H17 participates in an anthocyanidin binding. Catalysis depends on D117, which acts as the Charge relay. A UDP-alpha-D-glucose-binding site is contributed by T139. An an anthocyanidin-binding site is contributed by H148. UDP-alpha-D-glucose-binding residues include A331, Q333, H348, W351, N352, S353, and E356. G371 lines the an anthocyanidin pocket. UDP-alpha-D-glucose-binding residues include D372 and Q373.

It belongs to the UDP-glycosyltransferase family.

The catalysed reaction is an anthocyanidin + UDP-alpha-D-glucose + H(+) = an anthocyanidin 3-O-beta-D-glucoside + UDP. The enzyme catalyses delphinidin + UDP-alpha-D-glucose = delphinidin 3-O-beta-D-glucoside + UDP. It carries out the reaction pelargonidin + UDP-alpha-D-glucose = pelargonidin 3-O-beta-D-glucoside + UDP. It catalyses the reaction cyanidin + UDP-alpha-D-glucose = cyanidin 3-O-beta-D-glucoside + UDP + H(+). Its pathway is pigment biosynthesis; anthocyanin biosynthesis. In terms of biological role, in the presence of other necessary color factors, this glycosylation reaction allows the accumulation of anthocyanin pigments. Anthocyanidins are the preferred substrates, while flavonols are only a minor substrate in vitro. In Gentiana triflora (Clustered gentian), this protein is Anthocyanidin 3-O-glucosyltransferase.